We begin with the raw amino-acid sequence, 500 residues long: Cysteine--tRNA ligase (500 aa).

Cys29 contacts Zn(2+). Positions 31–41 match the 'HIGH' region motif; it reads VTVYDLCHLGH. Zn(2+) contacts are provided by Cys213, His238, and Glu242. A 'KMSKS' region motif is present at residues 270 to 274; sequence KMSKS. An ATP-binding site is contributed by Lys273.

It belongs to the class-I aminoacyl-tRNA synthetase family. As to quaternary structure, monomer. Zn(2+) is required as a cofactor.

It localises to the cytoplasm. It carries out the reaction tRNA(Cys) + L-cysteine + ATP = L-cysteinyl-tRNA(Cys) + AMP + diphosphate. This Prochlorococcus marinus (strain NATL2A) protein is Cysteine--tRNA ligase.